The following is a 469-amino-acid chain: ATP-dependent protease ATPase subunit HslU (469 aa).

Residues isoleucine 24, 66–71 (GVGKTE), aspartate 282, glutamate 347, and arginine 419 each bind ATP.

Belongs to the ClpX chaperone family. HslU subfamily. A double ring-shaped homohexamer of HslV is capped on each side by a ring-shaped HslU homohexamer. The assembly of the HslU/HslV complex is dependent on binding of ATP.

It localises to the cytoplasm. In terms of biological role, ATPase subunit of a proteasome-like degradation complex; this subunit has chaperone activity. The binding of ATP and its subsequent hydrolysis by HslU are essential for unfolding of protein substrates subsequently hydrolyzed by HslV. HslU recognizes the N-terminal part of its protein substrates and unfolds these before they are guided to HslV for hydrolysis. The chain is ATP-dependent protease ATPase subunit HslU from Listeria monocytogenes serovar 1/2a (strain ATCC BAA-679 / EGD-e).